A 1058-amino-acid polypeptide reads, in one-letter code: Carbamoyl phosphate synthase large chain (1058 aa).

The carboxyphosphate synthetic domain stretch occupies residues 1–401; the sequence is MPKRTDIQKI…SLLKACRSLE (401 aa). 12 residues coordinate ATP: arginine 129, arginine 169, glycine 175, glycine 176, arginine 208, isoleucine 210, glutamate 215, glycine 241, isoleucine 242, histidine 243, glutamine 284, and glutamate 298. Residues 133–327 enclose the ATP-grasp 1 domain; it reads KQLMEELEQP…IAKLAAKIAV (195 aa). Residues glutamine 284, glutamate 298, and asparagine 300 each contribute to the Mg(2+) site. Glutamine 284, glutamate 298, and asparagine 300 together coordinate Mn(2+). The oligomerization domain stretch occupies residues 402 to 546; sequence IGVHHNEIPE…YSTYGWENES (145 aa). The carbamoyl phosphate synthetic domain stretch occupies residues 547-929; sequence IRSDKESVLV…ALYKAFEASY (383 aa). An ATP-grasp 2 domain is found at 671–861; that stretch reads EQALKELDIP…MAQVATKLIL (191 aa). Residues arginine 707, serine 746, isoleucine 748, glutamate 752, glycine 777, valine 778, histidine 779, serine 780, glutamine 820, and glutamate 832 each contribute to the ATP site. Mg(2+) contacts are provided by glutamine 820, glutamate 832, and asparagine 834. Residues glutamine 820, glutamate 832, and asparagine 834 each contribute to the Mn(2+) site. The 129-residue stretch at 930–1058 folds into the MGS-like domain; sequence LHLPTFGNVV…ESRSFVTEAI (129 aa). The allosteric domain stretch occupies residues 930–1058; it reads LHLPTFGNVV…ESRSFVTEAI (129 aa).

Belongs to the CarB family. Composed of two chains; the small (or glutamine) chain promotes the hydrolysis of glutamine to ammonia, which is used by the large (or ammonia) chain to synthesize carbamoyl phosphate. Tetramer of heterodimers (alpha,beta)4. The cofactor is Mg(2+). It depends on Mn(2+) as a cofactor.

It carries out the reaction hydrogencarbonate + L-glutamine + 2 ATP + H2O = carbamoyl phosphate + L-glutamate + 2 ADP + phosphate + 2 H(+). It catalyses the reaction hydrogencarbonate + NH4(+) + 2 ATP = carbamoyl phosphate + 2 ADP + phosphate + 2 H(+). It participates in amino-acid biosynthesis; L-arginine biosynthesis; carbamoyl phosphate from bicarbonate: step 1/1. The protein operates within pyrimidine metabolism; UMP biosynthesis via de novo pathway; (S)-dihydroorotate from bicarbonate: step 1/3. Large subunit of the glutamine-dependent carbamoyl phosphate synthetase (CPSase). CPSase catalyzes the formation of carbamoyl phosphate from the ammonia moiety of glutamine, carbonate, and phosphate donated by ATP, constituting the first step of 2 biosynthetic pathways, one leading to arginine and/or urea and the other to pyrimidine nucleotides. The large subunit (synthetase) binds the substrates ammonia (free or transferred from glutamine from the small subunit), hydrogencarbonate and ATP and carries out an ATP-coupled ligase reaction, activating hydrogencarbonate by forming carboxy phosphate which reacts with ammonia to form carbamoyl phosphate. The polypeptide is Carbamoyl phosphate synthase large chain (Streptococcus pneumoniae (strain Hungary19A-6)).